The sequence spans 101 residues: B3 domain-containing protein At1g08985 (101 aa).

A DNA-binding region (TF-B3) is located at residues 7-101; it reads IVKTLSETDC…WQNTKFIFSM (95 aa).

The protein resides in the nucleus. This chain is B3 domain-containing protein At1g08985, found in Arabidopsis thaliana (Mouse-ear cress).